Consider the following 574-residue polypeptide: (R)-mandelonitrile lyase 4 (574 aa).

Residues 1–27 form the signal peptide; it reads MEKSTMSAVVLVLNLLVLHLQYSEVHS. The N-linked (GlcNAc...) asparagine glycan is linked to Asn30. 64 to 65 provides a ligand contact to FAD; it reads TS. A glycan (N-linked (GlcNAc...) asparagine) is linked at Asn76. Residues 83-84, Thr134, and 138-141 contribute to the FAD site; these read ER and NAGV. N-linked (GlcNAc...) asparagine glycosylation is found at Asn146, Asn151, and Asn179. Val245 contributes to the FAD binding site. N-linked (GlcNAc...) asparagine glycans are attached at residues Asn268 and Asn310. A substrate-binding site is contributed by Cys357. N-linked (GlcNAc...) asparagine glycans are attached at residues Asn381, Asn407, and Asn468. Residues Cys428 and Cys479 are joined by a disulfide bond. Residue Tyr486 coordinates substrate. Residues 487-488 and Gly516 contribute to the FAD site; that span reads WH. His488 acts as the Proton donor in catalysis. The active-site Proton acceptor is His526. 527–528 provides a ligand contact to FAD; that stretch reads PQ.

This sequence belongs to the GMC oxidoreductase family. In terms of assembly, monomer. FAD is required as a cofactor.

The protein localises to the vacuole. The protein resides in the aleurone grain. It carries out the reaction (R)-mandelonitrile = benzaldehyde + hydrogen cyanide. Involved in cyanogenesis, the release of HCN from injured tissues. Catalyzes the stereospecific addition of HCN to a variety of aldehydes in vitro. It is a major seed constituent, and could have the additional role of a storage form for reduced nitrogen. This is (R)-mandelonitrile lyase 4 (MDL4) from Prunus serotina (Black cherry).